Here is a 379-residue protein sequence, read N- to C-terminus: Queuine tRNA-ribosyltransferase (379 aa).

The Proton acceptor role is filled by Asp96. Substrate is bound by residues 96-100 (DSGGF), Asp150, Gln196, and Gly223. The tract at residues 254-260 (GIGTPDY) is RNA binding. Residue Asp273 is the Nucleophile of the active site. 4 residues coordinate Zn(2+): Cys311, Cys313, Cys316, and His342.

Belongs to the queuine tRNA-ribosyltransferase family. Homodimer. Within each dimer, one monomer is responsible for RNA recognition and catalysis, while the other monomer binds to the replacement base PreQ1. The cofactor is Zn(2+).

It catalyses the reaction 7-aminomethyl-7-carbaguanine + guanosine(34) in tRNA = 7-aminomethyl-7-carbaguanosine(34) in tRNA + guanine. It participates in tRNA modification; tRNA-queuosine biosynthesis. Catalyzes the base-exchange of a guanine (G) residue with the queuine precursor 7-aminomethyl-7-deazaguanine (PreQ1) at position 34 (anticodon wobble position) in tRNAs with GU(N) anticodons (tRNA-Asp, -Asn, -His and -Tyr). Catalysis occurs through a double-displacement mechanism. The nucleophile active site attacks the C1' of nucleotide 34 to detach the guanine base from the RNA, forming a covalent enzyme-RNA intermediate. The proton acceptor active site deprotonates the incoming PreQ1, allowing a nucleophilic attack on the C1' of the ribose to form the product. After dissociation, two additional enzymatic reactions on the tRNA convert PreQ1 to queuine (Q), resulting in the hypermodified nucleoside queuosine (7-(((4,5-cis-dihydroxy-2-cyclopenten-1-yl)amino)methyl)-7-deazaguanosine). This Treponema denticola (strain ATCC 35405 / DSM 14222 / CIP 103919 / JCM 8153 / KCTC 15104) protein is Queuine tRNA-ribosyltransferase.